A 274-amino-acid chain; its full sequence is Rhamnulose-1-phosphate aldolase (274 aa).

E117 is an active-site residue. Zn(2+)-binding residues include H141, H143, and H212.

Belongs to the aldolase class II family. RhaD subfamily. In terms of assembly, homotetramer. Zn(2+) is required as a cofactor.

It is found in the cytoplasm. It catalyses the reaction L-rhamnulose 1-phosphate = (S)-lactaldehyde + dihydroxyacetone phosphate. Its pathway is carbohydrate degradation; L-rhamnose degradation; glycerone phosphate from L-rhamnose: step 3/3. In terms of biological role, catalyzes the reversible cleavage of L-rhamnulose-1-phosphate to dihydroxyacetone phosphate (DHAP) and L-lactaldehyde. The sequence is that of Rhamnulose-1-phosphate aldolase from Escherichia coli O7:K1 (strain IAI39 / ExPEC).